The chain runs to 298 residues: Estradiol 17-beta-dehydrogenase 11 (298 aa).

The signal sequence occupies residues 1 to 21 (MKYLLDLILLLPLLIVFCIES). NADP(+) is bound at residue 40–64 (LITGAGHGIGRLTAYEFAKLNTKLV). Ser-172 is a substrate binding site. Residue Tyr-185 is the Proton acceptor of the active site.

Belongs to the short-chain dehydrogenases/reductases (SDR) family. 17-beta-HSD 3 subfamily.

The protein localises to the endoplasmic reticulum. The protein resides in the lipid droplet. The enzyme catalyses 17beta-estradiol + NAD(+) = estrone + NADH + H(+). The catalysed reaction is 17beta-estradiol + NADP(+) = estrone + NADPH + H(+). Can convert androstan-3-alpha,17-beta-diol (3-alpha-diol) to androsterone in vitro, suggesting that it may participate in androgen metabolism during steroidogenesis. May act by metabolizing compounds that stimulate steroid synthesis and/or by generating metabolites that inhibit it. Has no activity toward DHEA (dehydroepiandrosterone), or A-dione (4-androste-3,17-dione), and only a slight activity toward testosterone to A-dione. This Rattus norvegicus (Rat) protein is Estradiol 17-beta-dehydrogenase 11 (Hsd17b11).